The primary structure comprises 463 residues: uncharacterized protein (463 aa).

The N-terminal stretch at 1 to 23 (MKFSSIPIASTLLSLLVASSVTA) is a signal peptide. Disordered stretches follow at residues 174–200 (STYN…TKAS) and 239–258 (GAST…QRKN).

The protein belongs to the but2 family.

The protein resides in the cytoplasm. This is an uncharacterized protein from Schizosaccharomyces pombe (strain 972 / ATCC 24843) (Fission yeast).